Consider the following 454-residue polypeptide: tRNA modification GTPase MnmE (454 aa).

(6S)-5-formyl-5,6,7,8-tetrahydrofolate is bound by residues arginine 23, glutamate 80, and lysine 120. Residues 216-377 enclose the TrmE-type G domain; it reads GMKVVIAGRP…LRNHLKQSMG (162 aa). Asparagine 226 lines the K(+) pocket. Residues 226 to 231, 245 to 251, 270 to 273, 335 to 338, and 358 to 360 each bind GTP; these read NAGKSS, TDIAGTT, DTAG, NKAD, and SAR. Serine 230 is a Mg(2+) binding site. Residues threonine 245, isoleucine 247, and threonine 250 each coordinate K(+). Threonine 251 is a binding site for Mg(2+). Lysine 454 contributes to the (6S)-5-formyl-5,6,7,8-tetrahydrofolate binding site.

It belongs to the TRAFAC class TrmE-Era-EngA-EngB-Septin-like GTPase superfamily. TrmE GTPase family. In terms of assembly, homodimer. Heterotetramer of two MnmE and two MnmG subunits. K(+) serves as cofactor.

Its subcellular location is the cytoplasm. Functionally, exhibits a very high intrinsic GTPase hydrolysis rate. Involved in the addition of a carboxymethylaminomethyl (cmnm) group at the wobble position (U34) of certain tRNAs, forming tRNA-cmnm(5)s(2)U34. This chain is tRNA modification GTPase MnmE, found in Shigella sonnei (strain Ss046).